The primary structure comprises 369 residues: MSVGIVQEQSVTFDTELRLESGRILGPITLAYETYGELNADRSNAILVAHAWTGNAHLAGKNSEEDTKPGWWDAIVGPGRLLDTDRCFVICSNVIGSCYGSTGPASINPKTGKRYNLTFPVITVRDMVRAQALLLDHLGIDRLLTVLGGSMGGMQALEWATQFPDRIRSAIALATTSRPSPQAISLNAVARWAIFNDPTWKKGEYRKNPKDGLALARGIGHITFLSDESMWQKFGRRFNARDGLFDFFGQFEVERYLSYNGYNFVDRFDTNSFLYLAKALDLYDTAWGYESLEEAFSRVKAPIQFFAFTSDWLYPPYQTEEMATILRSLGKPVEYHLIESAYGHDAFLLEHETFAPMVREFLDKVERSE.

Residues 44-350 enclose the AB hydrolase-1 domain; the sequence is NAILVAHAWT…AYGHDAFLLE (307 aa). Residue Ser150 is the Nucleophile of the active site. Residue Arg217 participates in substrate binding. Residues Asp311 and His344 contribute to the active site. Residue Asp345 coordinates substrate.

This sequence belongs to the AB hydrolase superfamily. MetX family. Homodimer.

The protein resides in the cytoplasm. It catalyses the reaction L-homoserine + acetyl-CoA = O-acetyl-L-homoserine + CoA. It participates in amino-acid biosynthesis; L-methionine biosynthesis via de novo pathway; O-acetyl-L-homoserine from L-homoserine: step 1/1. Its function is as follows. Transfers an acetyl group from acetyl-CoA to L-homoserine, forming acetyl-L-homoserine. The sequence is that of Homoserine O-acetyltransferase from Geobacter metallireducens (strain ATCC 53774 / DSM 7210 / GS-15).